Reading from the N-terminus, the 237-residue chain is Ribonuclease 3 (237 aa).

The 127-residue stretch at 8–134 (RSALLEKLGV…VIGAVYLDAG (127 aa)) folds into the RNase III domain. A Mg(2+)-binding site is contributed by Glu-47. Residue Asp-51 is part of the active site. Asp-120 and Glu-123 together coordinate Mg(2+). The active site involves Glu-123. The DRBM domain occupies 161–229 (DPKTSLQEAA…ALSAWTALTN (69 aa)).

The protein belongs to the ribonuclease III family. As to quaternary structure, homodimer. Mg(2+) is required as a cofactor.

The protein localises to the cytoplasm. It carries out the reaction Endonucleolytic cleavage to 5'-phosphomonoester.. Functionally, digests double-stranded RNA. Involved in the processing of primary rRNA transcript to yield the immediate precursors to the large and small rRNAs (23S and 16S). Processes some mRNAs, and tRNAs when they are encoded in the rRNA operon. Processes pre-crRNA and tracrRNA of type II CRISPR loci if present in the organism. In Leifsonia xyli subsp. xyli (strain CTCB07), this protein is Ribonuclease 3.